A 962-amino-acid chain; its full sequence is UPF0182 protein SACE_1102 (962 aa).

7 consecutive transmembrane segments (helical) span residues 10-30 (ILLI…RLLG), 55-75 (LGLG…NLWI), 106-126 (LFGW…AQSD), 168-188 (FVAI…FGGI), 203-223 (IQLS…YFLD), 250-270 (VKLI…AAIF), and 279-299 (IATV…PALL). Disordered regions lie at residues 707–730 (RTFW…GNQQ) and 876–916 (FGPG…EMTK). The span at 899-910 (GQQPPTQQPPAG) shows a compositional bias: pro residues.

This sequence belongs to the UPF0182 family.

Its subcellular location is the cell membrane. This Saccharopolyspora erythraea (strain ATCC 11635 / DSM 40517 / JCM 4748 / NBRC 13426 / NCIMB 8594 / NRRL 2338) protein is UPF0182 protein SACE_1102.